A 928-amino-acid chain; its full sequence is MENINIEYGIDSNLNLDKFQDNEMEIKNLSKSFDNNNNNNSNTNNIKNNNRERSRRKSLSMPLLEPLPKPKRPPVPPRAFLMNDGADEKITNYIPTTPPSINITFEKKEDGDNYDDNYDDNYSGEDIKTSTTPPQFNSPEFNKNKPLPPIPIDQEKEDYHTMAPKPLPRVPSKIETFNDQNNNEGLQNSTSPLSSSPPPLGNLLNTSNGWRSANKPIDSSFSNIAPKRSTTLFDVTNPTIFPSSLNSSGSCCSSSGSGGKSPSNFLNFEPSKPNFENFDDYVFGNDSSELSQSQISPVVRTRRQRVFTRKAATMKLLDNGVDTDDENESELSKKSGTTLDSEPNLKSVSSSNRGSFVISKSSYNLRGSCSDEDDQENQTTNKNNSNNNNNNTTTNNNNNNNNNNNNNKDTLKVTETKHGRTVSLPEEPVSTLIPNATVSKKRPSLFNKFDFKSVIFEKIEEQQQKFESIPSRRSQLPYINDSTIFNKVVKEIIETEADYLDHMEITINFYLFAALEMVKYKILEKRDIFSIFSNFEEVYHISLKIYPMLLNCIPLLEKNQYPNIEEVFLFNSKSFQRYGSYLSSHDSCNKFLQEILLTNQTAAQIFQKLIPICKLNNLHSFLIKPCQRLCKYPLLLKELSKALPKEDEQNHKTIKRTTSLMGKIVSDINGKMKNDTKIQEIIKEIGTKDIEYLLHHQTFIGEGKVKKVNKNGSTSEGTLYLFNQRIVFAEKNSLFNKKATVISLSNISRVCDYDYRYPSGFAIYHNSKKVSTSSSSNLGTLSLGALIIISDEKLKWMNKIEDQIVSERVLAGTYTYVTNHFESFKNLENCSFSQSDSQSDFVDHDIQQEQQEQQQQQQEEEQTRVKIPQIVEPLSQQHDQPKLDHQQSSIQPKLSFPHLKQPKQDEKPIKKPKSPKHKNTEPENFSFY.

Residues 30–48 (SKSFDNNNNNNSNTNNIKN) show a composition bias toward low complexity. 3 disordered regions span residues 30 to 76 (SKSF…PPVP), 90 to 201 (ITNY…PPLG), and 318 to 410 (DNGV…NKDT). Positions 93 to 103 (YIPTTPPSINI) are enriched in polar residues. A compositionally biased stretch (acidic residues) spans 112–123 (DNYDDNYDDNYS). Polar residues-rich tracts occupy residues 129–141 (TSTT…SPEF), 175–187 (ETFN…EGLQ), and 334–367 (KSGT…NLRG). Residues 377 to 407 (NQTTNKNNSNNNNNNTTTNNNNNNNNNNNNN) show a composition bias toward low complexity. One can recognise a DH domain in the interval 484–671 (IFNKVVKEII…GKIVSDINGK (188 aa)). The PH-like stretch occupies residues 699-807 (FIGEGKVKKV…NKIEDQIVSE (109 aa)). The tract at residues 835-928 (SDSQSDFVDH…NTEPENFSFY (94 aa)) is disordered. The segment covering 848-857 (QEQQEQQQQQ) has biased composition (low complexity).

Its function is as follows. GTPase-activating protein. The chain is RhoGEF domain-containing protein gxcH (gxcH) from Dictyostelium discoideum (Social amoeba).